A 470-amino-acid chain; its full sequence is Zinc finger protein pat-9 (470 aa).

Residues 1–25 (MENRTPMQHHSGYEIVKSEPPSTPK) are disordered. 3 consecutive C2H2-type zinc fingers follow at residues 84–106 (YPCN…QNSH), 112–134 (FECD…KRIH), and 140–162 (FVCT…KDMH). The disordered stretch occupies residues 191 to 235 (MEQEENGGLPASSSASSVISHPLITTTSGNKKRSKAAKAKQTPSS). Residues 221–230 (KKRSKAAKAK) carry the Nuclear localization signal motif.

The protein belongs to the krueppel C2H2-type zinc-finger protein family. In terms of tissue distribution, expressed in body wall muscle and gonad (at protein level).

Its subcellular location is the nucleus. The protein resides in the chromosome. Probable transcription factor; required for proper organization of muscle myofilaments and for their recruitment to the M line. This is Zinc finger protein pat-9 from Caenorhabditis elegans.